Here is a 123-residue protein sequence, read N- to C-terminus: Large ribosomal subunit protein bL12 (123 aa).

This sequence belongs to the bacterial ribosomal protein bL12 family. Homodimer. Part of the ribosomal stalk of the 50S ribosomal subunit. Forms a multimeric L10(L12)X complex, where L10 forms an elongated spine to which 2 to 4 L12 dimers bind in a sequential fashion. Binds GTP-bound translation factors.

Its function is as follows. Forms part of the ribosomal stalk which helps the ribosome interact with GTP-bound translation factors. Is thus essential for accurate translation. The polypeptide is Large ribosomal subunit protein bL12 (Bartonella henselae (strain ATCC 49882 / DSM 28221 / CCUG 30454 / Houston 1) (Rochalimaea henselae)).